The sequence spans 217 residues: Peptide methionine sulfoxide reductase MsrA (217 aa).

Cys-56 is a catalytic residue.

It belongs to the MsrA Met sulfoxide reductase family.

It catalyses the reaction L-methionyl-[protein] + [thioredoxin]-disulfide + H2O = L-methionyl-(S)-S-oxide-[protein] + [thioredoxin]-dithiol. It carries out the reaction [thioredoxin]-disulfide + L-methionine + H2O = L-methionine (S)-S-oxide + [thioredoxin]-dithiol. Functionally, has an important function as a repair enzyme for proteins that have been inactivated by oxidation. Catalyzes the reversible oxidation-reduction of methionine sulfoxide in proteins to methionine. This is Peptide methionine sulfoxide reductase MsrA from Rippkaea orientalis (strain PCC 8801 / RF-1) (Cyanothece sp. (strain PCC 8801)).